Consider the following 192-residue polypeptide: Signal peptidase complex catalytic subunit sec11 (192 aa).

The Cytoplasmic portion of the chain corresponds to 1 to 18; the sequence is MLSFLSSNLSNTRQSIAQ. The chain crosses the membrane as a helical; Signal-anchor for type II membrane protein span at residues 19–39; it reads VLNFALVLSTAFMLWKGLSVV. Topologically, residues 40–192 are lumenal; the sequence is TASSSPIVVV…MGLMVILQRE (153 aa). Catalysis depends on charge relay system residues serine 53, histidine 92, and aspartate 134. Residues 178 to 189 form a C-terminal short (CTS) helix region; that stretch reads VLLGIMGLMVIL.

The protein belongs to the peptidase S26B family. Component of the signal peptidase complex (SPC) composed of a catalytic subunit SEC11 and three accessory subunits SPC1, SPC2 and SPC3. The complex induces a local thinning of the ER membrane which is used to measure the length of the signal peptide (SP) h-region of protein substrates. This ensures the selectivity of the complex towards h-regions shorter than 18-20 amino acids. SPC associates with the translocon complex.

The protein resides in the endoplasmic reticulum membrane. It catalyses the reaction Cleavage of hydrophobic, N-terminal signal or leader sequences from secreted and periplasmic proteins.. Functionally, catalytic component of the signal peptidase complex (SPC) which catalyzes the cleavage of N-terminal signal sequences from nascent proteins as they are translocated into the lumen of the endoplasmic reticulum. Specifically cleaves N-terminal signal peptides that contain a hydrophobic alpha-helix (h-region) shorter than 18-20 amino acids. The protein is Signal peptidase complex catalytic subunit sec11 (sec11) of Emericella nidulans (strain FGSC A4 / ATCC 38163 / CBS 112.46 / NRRL 194 / M139) (Aspergillus nidulans).